A 216-amino-acid polypeptide reads, in one-letter code: Adenylate kinase (216 aa).

10–15 (GAGKGT) is a binding site for ATP. An NMP region spans residues 30 to 59 (STGDIFRAAIKNQTPMGVEAKKFIDKGELV). Residues T31, R36, 57 to 59 (ELV), 85 to 88 (GFPR), and Q92 each bind AMP. The interval 126–164 (GRFICRNCGTTYHRLYNPTKVEGTCDVCGGHDFYQRDDD) is LID. Residue R127 participates in ATP binding. C130 and C133 together coordinate Zn(2+). Residue 136–137 (TY) participates in ATP binding. C150 and C153 together coordinate Zn(2+). AMP is bound by residues R161 and R172. An ATP-binding site is contributed by Q200.

This sequence belongs to the adenylate kinase family. As to quaternary structure, monomer.

The protein resides in the cytoplasm. The enzyme catalyses AMP + ATP = 2 ADP. It functions in the pathway purine metabolism; AMP biosynthesis via salvage pathway; AMP from ADP: step 1/1. Catalyzes the reversible transfer of the terminal phosphate group between ATP and AMP. Plays an important role in cellular energy homeostasis and in adenine nucleotide metabolism. The chain is Adenylate kinase from Limosilactobacillus fermentum (strain NBRC 3956 / LMG 18251) (Lactobacillus fermentum).